Consider the following 510-residue polypeptide: 2,3-bisphosphoglycerate-independent phosphoglycerate mutase (510 aa).

Mn(2+) is bound by residues D10 and S60. The Phosphoserine intermediate role is filled by S60. Residues H121, R150–D151, R182, R188, R252–R255, and K325 each bind substrate. Residues D392, H396, D433, H434, and H451 each coordinate Mn(2+).

Belongs to the BPG-independent phosphoglycerate mutase family. It depends on Mn(2+) as a cofactor.

It is found in the plastid. It localises to the chloroplast. It carries out the reaction (2R)-2-phosphoglycerate = (2R)-3-phosphoglycerate. The protein operates within carbohydrate degradation; glycolysis; pyruvate from D-glyceraldehyde 3-phosphate: step 3/5. Catalyzes the interconversion of 2-phosphoglycerate and 3-phosphoglycerate. This chain is 2,3-bisphosphoglycerate-independent phosphoglycerate mutase, found in Gracilaria tenuistipitata var. liui (Red alga).